A 385-amino-acid polypeptide reads, in one-letter code: Cytochrome b (385 aa).

The next 4 membrane-spanning stretches (helical) occupy residues 32–52 (FGAL…FLAM), 76–98 (WLIR…IHVF), 113–133 (LWNL…LGYV), and 179–199 (FFSL…IHVA). Heme b-binding residues include His-82 and His-96. Residues His-183 and His-197 each coordinate heme b. His-202 provides a ligand contact to a ubiquinone. 4 consecutive transmembrane segments (helical) span residues 226 to 246 (FIFK…YAVF), 290 to 310 (LGGV…PFIT), 322 to 342 (SKTI…WIGF), and 349 to 369 (YLML…SLAV).

It belongs to the cytochrome b family. In terms of assembly, the main subunits of complex b-c1 are: cytochrome b, cytochrome c1 and the Rieske protein. It depends on heme b as a cofactor.

Its subcellular location is the mitochondrion inner membrane. Functionally, component of the ubiquinol-cytochrome c reductase complex (complex III or cytochrome b-c1 complex) that is part of the mitochondrial respiratory chain. The b-c1 complex mediates electron transfer from ubiquinol to cytochrome c. Contributes to the generation of a proton gradient across the mitochondrial membrane that is then used for ATP synthesis. The polypeptide is Cytochrome b (MT-CYB) (Acanthamoeba castellanii (Amoeba)).